Consider the following 214-residue polypeptide: Charged multivesicular body protein 2b-B (214 aa).

The stretch at 25 to 55 (QRAITRDRAALEKQEKQLEMEIKKMAKTGNK) forms a coiled coil. Residues 178 to 200 (MAKAPSAAKGLPSTSAAKSKGIS) are disordered. The MIT-interacting motif signature appears at 202–212 (EEIERQLKALG).

The protein belongs to the SNF7 family. In terms of assembly, probable core component of the endosomal sorting required for transport complex III (ESCRT-III). ESCRT-III components are thought to multimerize to form a flat lattice on the perimeter membrane of the endosome.

The protein resides in the cytoplasm. Its subcellular location is the cytosol. The protein localises to the late endosome membrane. Its function is as follows. Probable core component of the endosomal sorting required for transport complex III (ESCRT-III) which is involved in multivesicular bodies (MVBs) formation and sorting of endosomal cargo proteins into MVBs. MVBs contain intraluminal vesicles (ILVs) that are generated by invagination and scission from the limiting membrane of the endosome and mostly are delivered to lysosomes enabling degradation of membrane proteins, such as stimulated growth factor receptors, lysosomal enzymes and lipids. The sequence is that of Charged multivesicular body protein 2b-B (chmp2b-b) from Xenopus laevis (African clawed frog).